The following is a 161-amino-acid chain: UPF0303 protein Spro_1996 (161 aa).

Belongs to the UPF0303 family.

This is UPF0303 protein Spro_1996 from Serratia proteamaculans (strain 568).